The sequence spans 157 residues: Alpha-amylase/trypsin inhibitor RA16 (157 aa).

The N-terminal stretch at 1–26 (MASNKVVISALLVVVVSVLAATTTMA) is a signal peptide. Disulfide bonds link cysteine 41-cysteine 89, cysteine 55-cysteine 77, cysteine 63-cysteine 121, cysteine 78-cysteine 137, and cysteine 91-cysteine 149.

Belongs to the cereal trypsin/alpha-amylase inhibitor family. Post-translationally, five disulfide bonds are present.

The protein resides in the secreted. Functionally, seed storage protein. The protein is Alpha-amylase/trypsin inhibitor RA16 of Oryza sativa subsp. japonica (Rice).